The chain runs to 572 residues: Methionine--tRNA ligase (572 aa).

The short motif at 11–21 (PYINGIKHLGN) is the 'HIGH' region element. Residues C143, C146, C156, and C159 each coordinate Zn(2+). The 'KMSKS' region motif lies at 346–350 (QFSTS). T349 contacts ATP.

This sequence belongs to the class-I aminoacyl-tRNA synthetase family. MetG type 1 subfamily. As to quaternary structure, monomer. It depends on Zn(2+) as a cofactor.

Its subcellular location is the cytoplasm. The catalysed reaction is tRNA(Met) + L-methionine + ATP = L-methionyl-tRNA(Met) + AMP + diphosphate. In terms of biological role, is required not only for elongation of protein synthesis but also for the initiation of all mRNA translation through initiator tRNA(fMet) aminoacylation. The protein is Methionine--tRNA ligase of Cereibacter sphaeroides (strain KD131 / KCTC 12085) (Rhodobacter sphaeroides).